The following is a 221-amino-acid chain: Large ribosomal subunit protein uL3 (221 aa).

Positions 123-156 (GFAGSIKRHNQSRGPESHGSRYHRRPGSMGPIKG) are disordered.

The protein belongs to the universal ribosomal protein uL3 family. In terms of assembly, part of the 50S ribosomal subunit. Forms a cluster with proteins L14 and L19.

Its function is as follows. One of the primary rRNA binding proteins, it binds directly near the 3'-end of the 23S rRNA, where it nucleates assembly of the 50S subunit. In Aster yellows witches'-broom phytoplasma (strain AYWB), this protein is Large ribosomal subunit protein uL3.